We begin with the raw amino-acid sequence, 206 residues long: Transmembrane emp24 domain-containing protein bai (206 aa).

A signal peptide spans 1 to 20 (MLKVLYVIFTIFGYIWPIYS). Residues 21–172 (VMFHLTPNTQ…RDTNEKTNSR (152 aa)) lie on the Lumenal side of the membrane. Residues 30-140 (QKCLKEDIQA…LKPLEVDLKR (111 aa)) form the GOLD domain. Residues 173–193 (VLFFSIFSMCCLLGLATWQVL) form a helical membrane-spanning segment. The Cytoplasmic segment spans residues 194–206 (YLRRYFKAKKLIE).

This sequence belongs to the EMP24/GP25L family.

Its subcellular location is the membrane. Eca and bai are essential, though not redundant, for dorsoventral patterning of the embryo. Specifically required during early embryogenesis for the activity of maternal tkv, while the zygotic tkv is not affected. This is Transmembrane emp24 domain-containing protein bai from Drosophila virilis (Fruit fly).